A 201-amino-acid polypeptide reads, in one-letter code: 3-isopropylmalate dehydratase small subunit (201 aa).

The protein belongs to the LeuD family. LeuD type 1 subfamily. As to quaternary structure, heterodimer of LeuC and LeuD.

The enzyme catalyses (2R,3S)-3-isopropylmalate = (2S)-2-isopropylmalate. It functions in the pathway amino-acid biosynthesis; L-leucine biosynthesis; L-leucine from 3-methyl-2-oxobutanoate: step 2/4. Functionally, catalyzes the isomerization between 2-isopropylmalate and 3-isopropylmalate, via the formation of 2-isopropylmaleate. In Escherichia coli O157:H7, this protein is 3-isopropylmalate dehydratase small subunit.